Reading from the N-terminus, the 287-residue chain is tRNA (guanine(9)-N1)-methyltransferase (287 aa).

The segment at 1-27 (MSDTSDLVDGKWQRLPPVPEGMSKSQW) is disordered. Residues 79–272 (EPRVNRDQVA…SVIPSRKLDP (194 aa)) form the SAM-dependent MTase TRM10-type domain. Residues 179–180 (LT), Gly-199, 203–207 (DKNRH), Cys-211, Leu-225, and 237–239 (KVL) contribute to the S-adenosyl-L-methionine site. Asp-203 functions as the Proton acceptor in the catalytic mechanism. Over residues 268–278 (RKLDPVKEKEQ) the composition is skewed to basic and acidic residues. Residues 268–287 (RKLDPVKEKEQQQQQQQQQQ) are disordered.

This sequence belongs to the class IV-like SAM-binding methyltransferase superfamily. TRM10 family. In terms of assembly, monomer.

It is found in the cytoplasm. Its subcellular location is the nucleus. It catalyses the reaction guanosine(9) in tRNA + S-adenosyl-L-methionine = N(1)-methylguanosine(9) in tRNA + S-adenosyl-L-homocysteine + H(+). Its function is as follows. S-adenosyl-L-methionine-dependent guanine N(1)-methyltransferase that catalyzes the formation of N(1)-methylguanine at position 9 (m1G9) in cytoplasmic tRNA. In Candida glabrata (strain ATCC 2001 / BCRC 20586 / JCM 3761 / NBRC 0622 / NRRL Y-65 / CBS 138) (Yeast), this protein is tRNA (guanine(9)-N1)-methyltransferase.